The sequence spans 88 residues: MYKGIFLCVLFAVICANSLAKPSSDADEDNDEVERYVRGWASKIGQTLGKIAKVGLQGLMQPKREAMLRSAEAQGMIGTLTSKRIKQG.

The first 20 residues, 1–20, serve as a signal peptide directing secretion; sequence MYKGIFLCVLFAVICANSLA. Glutamine 74 bears the Pyrrolidone carboxylic acid mark. The residue at position 87 (glutamine 87) is a Glutamine amide.

It belongs to the gastrin/cholecystokinin family. Expressed by the skin glands.

Its subcellular location is the secreted. The protein is Prolevitide of Xenopus laevis (African clawed frog).